The primary structure comprises 304 residues: Type II methyltransferase M.ScaI (304 aa).

It belongs to the N(4)/N(6)-methyltransferase family. N(4) subfamily.

It catalyses the reaction a 2'-deoxycytidine in DNA + S-adenosyl-L-methionine = an N(4)-methyl-2'-deoxycytidine in DNA + S-adenosyl-L-homocysteine + H(+). A methylase that recognizes the double-stranded sequence 5'-AGTACT-3', methylates C-5 on both strands, and protects the DNA from cleavage by the ScaI endonuclease. This chain is Type II methyltransferase M.ScaI, found in Streptomyces caespitosus.